The sequence spans 359 residues: Guanine nucleotide-binding protein subunit alpha-11 (359 aa).

Residues C9 and C10 are each lipidated (S-palmitoyl cysteine). The G-alpha domain occupies 38 to 359 (RELKLLLLGT…QLNLKEYNLV (322 aa)). The G1 motif stretch occupies residues 41–54 (KLLLLGTGESGKST). Residues 46–53 (GTGESGKS) and 180–183 (LRVR) each bind GTP. S53 lines the Mg(2+) pocket. A G2 motif region spans residues 178 to 186 (DVLRVRVPT). Mg(2+) is bound at residue T186. A G3 motif region spans residues 201-210 (FRMVDVGGQR). Deamidated glutamine; by Photorhabdus PAU_02230 is present on Q209. The tract at residues 270 to 277 (ILFLNKKD) is G4 motif. GTP contacts are provided by residues 274–277 (NKKD) and A331. A G5 motif region spans residues 329 to 334 (TCATDT).

Belongs to the G-alpha family. G(q) subfamily. As to quaternary structure, g proteins are composed of 3 units; alpha, beta and gamma. The alpha chain contains the guanine nucleotide binding site. Interacts with RGS22. Interacts with NTSR1. (Microbial infection) Interacts with human cytomegalovirus (HHV-5) US28. Post-translationally, (Microbial infection) Deamidated at Gln-209 by Photorhabdus asymbiotica toxin PAU_02230, blocking GTP hydrolysis of heterotrimeric GNAQ or GNA11 and G-alphai (GNAI1, GNAI2 or GNAI3) proteins, thereby activating RhoA. Expressed in testis.

It is found in the cell membrane. The protein localises to the cytoplasm. It carries out the reaction GTP + H2O = GDP + phosphate + H(+). Guanine nucleotide-binding proteins (G proteins) function as transducers downstream of G protein-coupled receptors (GPCRs) in numerous signaling cascades. The alpha chain contains the guanine nucleotide binding site and alternates between an active, GTP-bound state and an inactive, GDP-bound state. Signaling by an activated GPCR promotes GDP release and GTP binding. The alpha subunit has a low GTPase activity that converts bound GTP to GDP, thereby terminating the signal. Both GDP release and GTP hydrolysis are modulated by numerous regulatory proteins. Signaling is mediated via phospholipase C-beta-dependent inositol lipid hydrolysis for signal propagation: activates phospholipase C-beta: following GPCR activation, GNA11 activates PLC-beta (PLCB1, PLCB2, PLCB3 or PLCB4), leading to production of diacylglycerol (DAG) and inositol 1,4,5-trisphosphate (IP3). Transduces FFAR4 signaling in response to long-chain fatty acids (LCFAs). Together with GNAQ, required for heart development. In the respiratory epithelium, transmits OXGR1-dependent signals that lead to downstream intracellular Ca(2+) release and mucocilliary clearance of airborne pathogens. This Homo sapiens (Human) protein is Guanine nucleotide-binding protein subunit alpha-11 (GNA11).